A 218-amino-acid chain; its full sequence is Elongation factor Ts (218 aa).

The segment at 82 to 85 is involved in Mg(2+) ion dislocation from EF-Tu; the sequence is TDFV.

Belongs to the EF-Ts family.

It localises to the cytoplasm. Associates with the EF-Tu.GDP complex and induces the exchange of GDP to GTP. It remains bound to the aminoacyl-tRNA.EF-Tu.GTP complex up to the GTP hydrolysis stage on the ribosome. The sequence is that of Elongation factor Ts from Prochlorococcus marinus (strain NATL1A).